The sequence spans 727 residues: Polyribonucleotide nucleotidyltransferase (727 aa).

Mg(2+) is bound by residues Asp488 and Asp494. The KH domain maps to 555 to 614; the sequence is PKLYTMKINPEKIRDVIGKGGATIRALTDETGCQINIEEDGTITIAATEAAKADEAKRRI. One can recognise an S1 motif domain in the interval 624–692; the sequence is GKIYEGPVTK…DKGRVKLSMK (69 aa). Residues 691–727 are disordered; sequence MKALADRPAGDSGRPAPAERGERRERRDGGASEQQQQ. A compositionally biased stretch (basic and acidic residues) spans 707–720; it reads PAERGERRERRDGG.

The protein belongs to the polyribonucleotide nucleotidyltransferase family. The cofactor is Mg(2+).

The protein localises to the cytoplasm. The enzyme catalyses RNA(n+1) + phosphate = RNA(n) + a ribonucleoside 5'-diphosphate. In terms of biological role, involved in mRNA degradation. Catalyzes the phosphorolysis of single-stranded polyribonucleotides processively in the 3'- to 5'-direction. The chain is Polyribonucleotide nucleotidyltransferase from Acidovorax sp. (strain JS42).